A 411-amino-acid chain; its full sequence is Squalene synthase (411 aa).

The next 2 helical transmembrane spans lie at 281 to 301 (SIFR…AMCY) and 388 to 408 (SPVL…QLSG).

Belongs to the phytoene/squalene synthase family. Mg(2+) serves as cofactor.

Its subcellular location is the endoplasmic reticulum membrane. It catalyses the reaction 2 (2E,6E)-farnesyl diphosphate + NADPH + H(+) = squalene + 2 diphosphate + NADP(+). The catalysed reaction is 2 (2E,6E)-farnesyl diphosphate + NADH + H(+) = squalene + 2 diphosphate + NAD(+). It functions in the pathway terpene metabolism; lanosterol biosynthesis; lanosterol from farnesyl diphosphate: step 1/3. In Nicotiana benthamiana, this protein is Squalene synthase.